We begin with the raw amino-acid sequence, 101 residues long: Integration host factor subunit beta (101 aa).

Belongs to the bacterial histone-like protein family. As to quaternary structure, heterodimer of an alpha and a beta chain.

In terms of biological role, this protein is one of the two subunits of integration host factor, a specific DNA-binding protein that functions in genetic recombination as well as in transcriptional and translational control. The polypeptide is Integration host factor subunit beta (Maricaulis maris (strain MCS10) (Caulobacter maris)).